Consider the following 220-residue polypeptide: PKHD-type hydroxylase PCC7424_1929 (220 aa).

One can recognise a Fe2OG dioxygenase domain in the interval 77–173; it reads KIHSLLFSRY…RLVAVGWVQS (97 aa). Residues histidine 95, aspartate 97, and histidine 154 each coordinate Fe cation. Arginine 164 is a 2-oxoglutarate binding site.

The cofactor is Fe(2+). L-ascorbate serves as cofactor.

The chain is PKHD-type hydroxylase PCC7424_1929 from Gloeothece citriformis (strain PCC 7424) (Cyanothece sp. (strain PCC 7424)).